We begin with the raw amino-acid sequence, 453 residues long: Tol-Pal system protein TolB (453 aa).

Positions 1 to 31 (MINNLSVSMTKVLKIILTIIIILFNTLSILA) are cleaved as a signal peptide.

The protein belongs to the TolB family. As to quaternary structure, the Tol-Pal system is composed of five core proteins: the inner membrane proteins TolA, TolQ and TolR, the periplasmic protein TolB and the outer membrane protein Pal. They form a network linking the inner and outer membranes and the peptidoglycan layer.

The protein localises to the periplasm. Its function is as follows. Part of the Tol-Pal system, which plays a role in outer membrane invagination during cell division and is important for maintaining outer membrane integrity. In Orientia tsutsugamushi (strain Boryong) (Rickettsia tsutsugamushi), this protein is Tol-Pal system protein TolB.